The following is a 226-amino-acid chain: Large ribosomal subunit protein uL1 (226 aa).

The protein belongs to the universal ribosomal protein uL1 family. In terms of assembly, part of the 50S ribosomal subunit.

Its function is as follows. Binds directly to 23S rRNA. The L1 stalk is quite mobile in the ribosome, and is involved in E site tRNA release. In terms of biological role, protein L1 is also a translational repressor protein, it controls the translation of the L11 operon by binding to its mRNA. The chain is Large ribosomal subunit protein uL1 from Buchnera aphidicola subsp. Cinara cedri (strain Cc).